We begin with the raw amino-acid sequence, 299 residues long: Coenzyme PQQ synthesis protein B (299 aa).

This sequence belongs to the PqqB family.

Its pathway is cofactor biosynthesis; pyrroloquinoline quinone biosynthesis. May be involved in the transport of PQQ or its precursor to the periplasm. The sequence is that of Coenzyme PQQ synthesis protein B from Methylorubrum extorquens (strain CM4 / NCIMB 13688) (Methylobacterium extorquens).